The chain runs to 557 residues: MYDKSRSNKVYGGYEKAPNRAFLKAMGLTDDDISKPLVGVAVAWNEAGPCNIHLLGLSQVVKEGIRELGGTPRTFTAPVLIDGIAMGSESMKYSLVSREVIANTVELTVNGHGYDGFVALGGCDKTQPGLMMSMARLNIPSVYMYGGTTLPGNFRGRDIAIGDVYEAVGAFSAGKITAEDLRIMEDNAIPGPGACGGLYTANTMAMLSEALGLSLPGSSAPPAVSSDRTKFAKETGRTLMKVMEIGLKPRDILTFEAFENGIALLMASGGSTNGVLHLLAIAHEAGVSLTLDDFDRISKKVPEIVNMKPGGDYVMADLYRVGGTPVILKKLLDRGLLHGDTITVTGKTMAQNLSEYKIPEFKHDHIVRDLSNPFLPSGGIRILKGSLAPEGSVVKLSASKIKYHRGPARVFNSEEEAFETVLKKKINEGDVVVIRYEGPKGGPGMREMLAVTSAIVGQGLGEKVALVTDGRFSGATRGLMVGHVAPEAAVGGPIALIRDGDTIVIDGEKGRLDVELSDQELKSRAKDWTPPEPRYKTGLLAQYAKLVTSSARGAVLV.

Cys-50 is a [2Fe-2S] cluster binding site. Asp-82 contacts Mg(2+). Cys-123 serves as a coordination point for [2Fe-2S] cluster. Positions 124 and 125 each coordinate Mg(2+). Lys-125 is modified (N6-carboxylysine). Residue Cys-195 coordinates [2Fe-2S] cluster. Position 447 (Glu-447) interacts with Mg(2+). Residue Ser-473 is the Proton acceptor of the active site.

This sequence belongs to the IlvD/Edd family. In terms of assembly, homodimer. It depends on [2Fe-2S] cluster as a cofactor. Requires Mg(2+) as cofactor.

It carries out the reaction (2R)-2,3-dihydroxy-3-methylbutanoate = 3-methyl-2-oxobutanoate + H2O. It catalyses the reaction (2R,3R)-2,3-dihydroxy-3-methylpentanoate = (S)-3-methyl-2-oxopentanoate + H2O. It participates in amino-acid biosynthesis; L-isoleucine biosynthesis; L-isoleucine from 2-oxobutanoate: step 3/4. It functions in the pathway amino-acid biosynthesis; L-valine biosynthesis; L-valine from pyruvate: step 3/4. Its function is as follows. Functions in the biosynthesis of branched-chain amino acids. Catalyzes the dehydration of (2R,3R)-2,3-dihydroxy-3-methylpentanoate (2,3-dihydroxy-3-methylvalerate) into 2-oxo-3-methylpentanoate (2-oxo-3-methylvalerate) and of (2R)-2,3-dihydroxy-3-methylbutanoate (2,3-dihydroxyisovalerate) into 2-oxo-3-methylbutanoate (2-oxoisovalerate), the penultimate precursor to L-isoleucine and L-valine, respectively. This is Dihydroxy-acid dehydratase from Metallosphaera sedula (strain ATCC 51363 / DSM 5348 / JCM 9185 / NBRC 15509 / TH2).